Consider the following 363-residue polypeptide: Phospho-N-acetylmuramoyl-pentapeptide-transferase (363 aa).

11 consecutive transmembrane segments (helical) span residues 27–47 (AGAA…PLIA), 76–96 (TMGG…WADL), 97–117 (TDGY…VGFA), 137–157 (LGCE…LMPA), 171–191 (WLLP…TGFG), 202–222 (GLAI…SYLV), 226–246 (VFAD…CVFC), 248–268 (ALVG…AVFM), 271–291 (TGSL…KHEL), 292–312 (VLCI…IQVF), and 340–360 (KIVI…LATL).

It belongs to the glycosyltransferase 4 family. MraY subfamily. Requires Mg(2+) as cofactor.

The protein resides in the cell inner membrane. It carries out the reaction UDP-N-acetyl-alpha-D-muramoyl-L-alanyl-gamma-D-glutamyl-meso-2,6-diaminopimeloyl-D-alanyl-D-alanine + di-trans,octa-cis-undecaprenyl phosphate = di-trans,octa-cis-undecaprenyl diphospho-N-acetyl-alpha-D-muramoyl-L-alanyl-D-glutamyl-meso-2,6-diaminopimeloyl-D-alanyl-D-alanine + UMP. The protein operates within cell wall biogenesis; peptidoglycan biosynthesis. Catalyzes the initial step of the lipid cycle reactions in the biosynthesis of the cell wall peptidoglycan: transfers peptidoglycan precursor phospho-MurNAc-pentapeptide from UDP-MurNAc-pentapeptide onto the lipid carrier undecaprenyl phosphate, yielding undecaprenyl-pyrophosphoryl-MurNAc-pentapeptide, known as lipid I. The protein is Phospho-N-acetylmuramoyl-pentapeptide-transferase of Gluconacetobacter diazotrophicus (strain ATCC 49037 / DSM 5601 / CCUG 37298 / CIP 103539 / LMG 7603 / PAl5).